The chain runs to 571 residues: Proline--tRNA ligase (571 aa).

It belongs to the class-II aminoacyl-tRNA synthetase family. ProS type 1 subfamily. Homodimer.

Its subcellular location is the cytoplasm. The enzyme catalyses tRNA(Pro) + L-proline + ATP = L-prolyl-tRNA(Pro) + AMP + diphosphate. Its function is as follows. Catalyzes the attachment of proline to tRNA(Pro) in a two-step reaction: proline is first activated by ATP to form Pro-AMP and then transferred to the acceptor end of tRNA(Pro). As ProRS can inadvertently accommodate and process non-cognate amino acids such as alanine and cysteine, to avoid such errors it has two additional distinct editing activities against alanine. One activity is designated as 'pretransfer' editing and involves the tRNA(Pro)-independent hydrolysis of activated Ala-AMP. The other activity is designated 'posttransfer' editing and involves deacylation of mischarged Ala-tRNA(Pro). The misacylated Cys-tRNA(Pro) is not edited by ProRS. In Vibrio atlanticus (strain LGP32) (Vibrio splendidus (strain Mel32)), this protein is Proline--tRNA ligase.